A 260-amino-acid polypeptide reads, in one-letter code: 14-3-3 protein 4 (260 aa).

The tract at residues D238–Q260 is disordered. Residues D245–Q260 are compositionally biased toward basic and acidic residues.

This sequence belongs to the 14-3-3 family. In terms of assembly, homodimer.

This chain is 14-3-3 protein 4 (TFT4), found in Solanum lycopersicum (Tomato).